A 247-amino-acid chain; its full sequence is MIIFPAVDIKDGQCVRLRQGVADAVTVFSPDPEAMARHWEGLGAKWLHLIDLDGAFSGKPRNFDLIARICSGLSIPVQLGGGVRDAATAAAYLEAGVKRLIIGTLALADPDAFAAICAAHPGRVGVSLDAVDGNLKVKGWVEDSGRTVEDVLPGLSAAGAAFVVYTDISRDGMQSGVNLPALQRLLELTDLPVIAAGGVATLDDVKALYPYGKKGLEGLISGRAIYEGTLDFPAALAYIAEKAKEDA.

Catalysis depends on D8, which acts as the Proton acceptor. The Proton donor role is filled by D129.

It belongs to the HisA/HisF family.

Its subcellular location is the cytoplasm. It catalyses the reaction 1-(5-phospho-beta-D-ribosyl)-5-[(5-phospho-beta-D-ribosylamino)methylideneamino]imidazole-4-carboxamide = 5-[(5-phospho-1-deoxy-D-ribulos-1-ylimino)methylamino]-1-(5-phospho-beta-D-ribosyl)imidazole-4-carboxamide. It functions in the pathway amino-acid biosynthesis; L-histidine biosynthesis; L-histidine from 5-phospho-alpha-D-ribose 1-diphosphate: step 4/9. The chain is 1-(5-phosphoribosyl)-5-[(5-phosphoribosylamino)methylideneamino] imidazole-4-carboxamide isomerase from Solidesulfovibrio magneticus (strain ATCC 700980 / DSM 13731 / RS-1) (Desulfovibrio magneticus).